The primary structure comprises 114 residues: Probable 4-amino-4-deoxy-L-arabinose-phosphoundecaprenol flippase subunit ArnE (114 aa).

The next 3 helical transmembrane spans lie at 38–58 (LTLR…LLWL), 64–84 (LPLS…TLAA), and 94–114 (LRHW…SWHL). An EamA domain is found at 43–112 (LAIAVVSLGL…IMFGILLMSW (70 aa)).

Belongs to the ArnE family. In terms of assembly, heterodimer of ArnE and ArnF.

The protein localises to the cell inner membrane. Its pathway is bacterial outer membrane biogenesis; lipopolysaccharide biosynthesis. Translocates 4-amino-4-deoxy-L-arabinose-phosphoundecaprenol (alpha-L-Ara4N-phosphoundecaprenol) from the cytoplasmic to the periplasmic side of the inner membrane. The polypeptide is Probable 4-amino-4-deoxy-L-arabinose-phosphoundecaprenol flippase subunit ArnE (Yersinia pestis bv. Antiqua (strain Antiqua)).